A 4749-amino-acid polypeptide reads, in one-letter code: Dynein heavy chain domain-containing protein 1 (4749 aa).

Residues 1–18 (MKPHSQTSPPSLPMPSTS) are compositionally biased toward low complexity. 3 disordered regions span residues 1-27 (MKPHSQTSPPSLPMPSTSCRPGQTQKP), 275-308 (ESSDTEQAEGEPAGRKLQVASEAPEEKALKKKSS), and 2690-2785 (ESLA…KLQS). Over residues 2696–2716 (CEEEEVEEEKVPEVESEEEIA) the composition is skewed to acidic residues. Polar residues predominate over residues 2738-2749 (QATTGSFLSENS). A coiled-coil region spans residues 3197-3224 (CQHQESLIENLVRQHDALKAQQEVFLEQ). The disordered stretch occupies residues 3568 to 3667 (PPKQNRSLEP…SLPSCLTVLS (100 aa)). Positions 3578–3593 (SPKESKEKFHVTKQDS) are enriched in basic and acidic residues. Residues 3594–3636 (GDNTEDELEDENNEEEDEANEQRKEQKAEENKIQGENEQEVQE) are a coiled coil. Over residues 3595-3612 (DNTEDELEDENNEEEDEA) the composition is skewed to acidic residues. The span at 3613–3628 (NEQRKEQKAEENKIQG) shows a compositional bias: basic and acidic residues. A compositionally biased stretch (low complexity) spans 3644-3655 (ESSGSHSSLPSE). A compositionally biased stretch (polar residues) spans 3656–3667 (TQSLPSCLTVLS). Coiled-coil stretches lie at residues 3818 to 3838 (MVRTQAKICQLNAQMEELEDQ) and 4431 to 4451 (ERQLQQRLAQAKKRLVALQAL).

This sequence belongs to the dynein heavy chain family. As to expression, expressed in spermatozoa (at protein level).

The protein resides in the cell projection. It is found in the cilium. It localises to the flagellum. Its function is as follows. Essential for the normal function of sperm flagella axonemes. In Mus musculus (Mouse), this protein is Dynein heavy chain domain-containing protein 1 (Dnhd1).